The sequence spans 157 residues: Peptide methionine sulfoxide reductase MsrA (157 aa).

C13 is an active-site residue.

The protein belongs to the MsrA Met sulfoxide reductase family.

The enzyme catalyses L-methionyl-[protein] + [thioredoxin]-disulfide + H2O = L-methionyl-(S)-S-oxide-[protein] + [thioredoxin]-dithiol. The catalysed reaction is [thioredoxin]-disulfide + L-methionine + H2O = L-methionine (S)-S-oxide + [thioredoxin]-dithiol. Functionally, has an important function as a repair enzyme for proteins that have been inactivated by oxidation. Catalyzes the reversible oxidation-reduction of methionine sulfoxide in proteins to methionine. The sequence is that of Peptide methionine sulfoxide reductase MsrA from Methanococcus maripaludis (strain C7 / ATCC BAA-1331).